The primary structure comprises 340 residues: UDP-3-O-acylglucosamine N-acyltransferase (340 aa).

Residue histidine 237 is the Proton acceptor of the active site.

This sequence belongs to the transferase hexapeptide repeat family. LpxD subfamily. In terms of assembly, homotrimer.

It catalyses the reaction a UDP-3-O-[(3R)-3-hydroxyacyl]-alpha-D-glucosamine + a (3R)-hydroxyacyl-[ACP] = a UDP-2-N,3-O-bis[(3R)-3-hydroxyacyl]-alpha-D-glucosamine + holo-[ACP] + H(+). Its pathway is bacterial outer membrane biogenesis; LPS lipid A biosynthesis. In terms of biological role, catalyzes the N-acylation of UDP-3-O-acylglucosamine using 3-hydroxyacyl-ACP as the acyl donor. Is involved in the biosynthesis of lipid A, a phosphorylated glycolipid that anchors the lipopolysaccharide to the outer membrane of the cell. This Desulfosudis oleivorans (strain DSM 6200 / JCM 39069 / Hxd3) (Desulfococcus oleovorans) protein is UDP-3-O-acylglucosamine N-acyltransferase.